We begin with the raw amino-acid sequence, 276 residues long: Tryptophan synthase alpha chain (276 aa).

Residues Glu49 and Asp60 each act as proton acceptor in the active site.

It belongs to the TrpA family. In terms of assembly, tetramer of two alpha and two beta chains.

The catalysed reaction is (1S,2R)-1-C-(indol-3-yl)glycerol 3-phosphate + L-serine = D-glyceraldehyde 3-phosphate + L-tryptophan + H2O. It participates in amino-acid biosynthesis; L-tryptophan biosynthesis; L-tryptophan from chorismate: step 5/5. In terms of biological role, the alpha subunit is responsible for the aldol cleavage of indoleglycerol phosphate to indole and glyceraldehyde 3-phosphate. The sequence is that of Tryptophan synthase alpha chain from Acidiphilium cryptum (strain JF-5).